The chain runs to 303 residues: Glutamyl-Q tRNA(Asp) synthetase (303 aa).

L-glutamate is bound by residues 16–20 and Glu52; that span reads RFAPS. Residues 19–29 carry the 'HIGH' region motif; the sequence is PSPSGPLHFGS. Zn(2+) is bound by residues Cys108, Cys110, Tyr122, and Cys126. The L-glutamate site is built by Tyr177 and Arg195. The short motif at 233–237 is the 'KMSKS' region element; sequence KLSKQ. Position 236 (Lys236) interacts with ATP.

Belongs to the class-I aminoacyl-tRNA synthetase family. GluQ subfamily. Zn(2+) is required as a cofactor.

In terms of biological role, catalyzes the tRNA-independent activation of glutamate in presence of ATP and the subsequent transfer of glutamate onto a tRNA(Asp). Glutamate is transferred on the 2-amino-5-(4,5-dihydroxy-2-cyclopenten-1-yl) moiety of the queuosine in the wobble position of the QUC anticodon. This is Glutamyl-Q tRNA(Asp) synthetase from Vibrio vulnificus (strain CMCP6).